A 504-amino-acid polypeptide reads, in one-letter code: Glycerol kinase (504 aa).

Threonine 12 is an ADP binding site. Positions 12, 13, and 14 each coordinate ATP. A sn-glycerol 3-phosphate-binding site is contributed by threonine 12. Arginine 16 is a binding site for ADP. Positions 82, 83, 134, and 249 each coordinate sn-glycerol 3-phosphate. Glycerol-binding residues include arginine 82, glutamate 83, tyrosine 134, aspartate 249, and glutamine 250. ADP contacts are provided by threonine 271 and glycine 315. Threonine 271, glycine 315, glutamine 319, and glycine 416 together coordinate ATP. Positions 416 and 420 each coordinate ADP.

This sequence belongs to the FGGY kinase family.

The enzyme catalyses glycerol + ATP = sn-glycerol 3-phosphate + ADP + H(+). It participates in polyol metabolism; glycerol degradation via glycerol kinase pathway; sn-glycerol 3-phosphate from glycerol: step 1/1. Its activity is regulated as follows. Inhibited by fructose 1,6-bisphosphate (FBP). Functionally, key enzyme in the regulation of glycerol uptake and metabolism. Catalyzes the phosphorylation of glycerol to yield sn-glycerol 3-phosphate. The polypeptide is Glycerol kinase (Mycobacteroides abscessus (strain ATCC 19977 / DSM 44196 / CCUG 20993 / CIP 104536 / JCM 13569 / NCTC 13031 / TMC 1543 / L948) (Mycobacterium abscessus)).